Consider the following 360-residue polypeptide: Peptide chain release factor 1 (360 aa).

Q237 bears the N5-methylglutamine mark.

Belongs to the prokaryotic/mitochondrial release factor family. In terms of processing, methylated by PrmC. Methylation increases the termination efficiency of RF1.

Its subcellular location is the cytoplasm. Peptide chain release factor 1 directs the termination of translation in response to the peptide chain termination codons UAG and UAA. This chain is Peptide chain release factor 1 (prfA), found in Pseudomonas aeruginosa (strain ATCC 15692 / DSM 22644 / CIP 104116 / JCM 14847 / LMG 12228 / 1C / PRS 101 / PAO1).